Reading from the N-terminus, the 248-residue chain is PF03932 family protein CutC (248 aa).

It belongs to the CutC family. In terms of assembly, homodimer.

It is found in the cytoplasm. The sequence is that of PF03932 family protein CutC from Escherichia coli O17:K52:H18 (strain UMN026 / ExPEC).